The primary structure comprises 257 residues: uncharacterized protein (257 aa).

Residues 6–26 traverse the membrane as a helical segment; it reads IFWLNLAAIIIISIVVSGDMF.

The protein belongs to the staphylococcal tandem lipoprotein family.

The protein localises to the cell membrane. This is an uncharacterized protein from Staphylococcus aureus (strain NCTC 8325 / PS 47).